The following is a 303-amino-acid chain: MGHRWLTDHSWNRPSWTVADLEAAKAGRTVSVVLPALNEEETVGSVVETIKPLLGGLVDELIVLDSGSTDETEIRAVAAGAKVVSREAALPEVPPQPGKGEVLWRSLAATTGDIIAFVDSDLIDPDPMFVPKLLGPLLTCDGVHLVKGFYRRPLKVSGAEDANGGGRVTELVARPLLASLRPELNCVLQPLGGEYAGTRELLTSVPFAPGYGVEIGLLVDTYDRLGLDGIAQVNLGVRAHRNRPLTELASMSRQVIATLLSRCGISDSGVGLTQFFADGDDFTPRVSSVSLADRPPMTTLRPR.

Residues 35-39, serine 66, lysine 99, and 119-120 contribute to the UDP-alpha-D-glucose site; these read PALNE and DS. Aspartate 121 lines the Mn(2+) pocket. Position 166–169 (166–169) interacts with (2R)-3-phosphoglycerate; it reads GRVT. UDP-alpha-D-glucose-binding positions include 211–214 and 238–243; these read YGVE and RAHRNR. Histidine 240 contributes to the Mn(2+) binding site. Asparagine 242 provides a ligand contact to (2R)-3-phosphoglycerate.

It belongs to the glycosyltransferase 2 family. In terms of assembly, homotrimer. Requires Mg(2+) as cofactor. Mn(2+) serves as cofactor.

The enzyme catalyses an NDP-alpha-D-glucose + (2R)-3-phosphoglycerate = (2R)-2-O-(alpha-D-glucopyranosyl)-3-phospho-glycerate + a ribonucleoside 5'-diphosphate + H(+). It catalyses the reaction (2R)-3-phosphoglycerate + UDP-alpha-D-glucose = (2R)-2-O-(alpha-D-glucopyranosyl)-3-phospho-glycerate + UDP + H(+). The catalysed reaction is ADP-alpha-D-glucose + (2R)-3-phosphoglycerate = (2R)-2-O-(alpha-D-glucopyranosyl)-3-phospho-glycerate + ADP + H(+). It carries out the reaction GDP-D-glucose + (2R)-3-phosphoglycerate = (2R)-2-O-(alpha-D-glucopyranosyl)-3-phospho-glycerate + GDP + H(+). Its function is as follows. Involved in the biosynthesis of 6-O-methylglucose lipopolysaccarides (MGLPs). Catalyzes the transfer of the glucose moiety from a nuleotide sugar such as UDP-alpha-D-glucose to the position 2 of 3-phospho-D-glycerate (3-PGA) to form glucosyl-3-phosphoglycerate (GPG). It can use UDP-glucose, ADP-glucose and GDP-glucose as sugar donor substrates with decreasing affinity and with 3-PGA as an acceptor. D-glycerate can only be an acceptor with ADP-glucose and at a very low rate. The sequence is that of Glucosyl-3-phosphoglycerate synthase (gpgS) from Mycolicibacterium smegmatis (strain ATCC 700084 / mc(2)155) (Mycobacterium smegmatis).